The primary structure comprises 484 residues: Zinc metalloproteinase-disintegrin BlatH1 (484 aa).

The N-terminal stretch at 1-20 (MIQVLLVTICLAALPYQGSS) is a signal peptide. The propeptide occupies 21 to 190 (IILESGNVND…KKASQSNLTP (170 aa)). Residue glutamate 191 is modified to Pyrrolidone carboxylic acid (Glu). Residues 199 to 395 (KYVELVIVAD…QNSQCILNEP (197 aa)) enclose the Peptidase M12B domain. Residue glutamate 202 coordinates Ca(2+). Residue asparagine 259 is glycosylated (N-linked (GlcNAc...) asparagine). Aspartate 286 is a Ca(2+) binding site. An N-linked (GlcNAc...) asparagine glycan is attached at asparagine 297. 3 cysteine pairs are disulfide-bonded: cysteine 310/cysteine 390, cysteine 350/cysteine 374, and cysteine 352/cysteine 357. Position 335 (histidine 335) interacts with Zn(2+). Residue glutamate 336 is part of the active site. Positions 339 and 345 each coordinate Zn(2+). A glycan (N-linked (GlcNAc...) asparagine) is linked at asparagine 373. Cysteine 390, asparagine 393, valine 405, asparagine 408, glutamate 412, glutamate 415, and aspartate 418 together coordinate Ca(2+). A Disintegrin domain is found at 403–484 (PPVCGNEILE…GQSADCPSNG (82 aa)). Intrachain disulfides connect cysteine 406-cysteine 425, cysteine 417-cysteine 435, cysteine 419-cysteine 430, cysteine 429-cysteine 452, cysteine 443-cysteine 449, cysteine 448-cysteine 473, and cysteine 461-cysteine 480. The TDN-tripeptide signature appears at 465–467 (TDN).

This sequence belongs to the venom metalloproteinase (M12B) family. P-II subfamily. P-IIc sub-subfamily. As to quaternary structure, homodimer. It depends on Zn(2+) as a cofactor. In terms of processing, the N-terminus is blocked. As to expression, expressed by the venom gland.

It localises to the secreted. Platelet aggregation in inhibited by the metalloproteinase inhibitors EDTA and Batimastat. The hemorrhagic activity is not inhibited by the plasma proteinase inhibitor alpha2-macroglobulin, although the SVMP is able to cleave this plasma inhibitor, generating a 90 kDa product. Its function is as follows. Snake venom zinc metalloprotease-disintegrin that hydrolyzes azocasein, gelatin and fibrinogen (Aalpha and Bbeta chains and partially gamma-chain), and exerts a potent local and systemic hemorrhagic activity in mice. It inhibits ADP- and collagen-induced human platelet aggregation (IC(50) = 0.3 uM and 0.7 uM for ADP and collagen, respectively). This inhibition is dependent of protease activity, and probably occurs through the degradation of an unknown platelet receptor. The chain is Zinc metalloproteinase-disintegrin BlatH1 from Bothriechis lateralis (Side-striped palm pitviper).